The primary structure comprises 333 residues: Protoheme IX farnesyltransferase (333 aa).

A run of 7 helical transmembrane segments spans residues 64-84, 110-130, 133-153, 161-181, 189-209, 246-266, and 287-307; these read LICT…LNCL, TVFL…VSGV, LAAG…TVIL, IVFG…AATG, WLFG…AILL, IMGV…LLPF, and AKSL…LLLI.

This sequence belongs to the UbiA prenyltransferase family. Protoheme IX farnesyltransferase subfamily.

Its subcellular location is the cell inner membrane. It catalyses the reaction heme b + (2E,6E)-farnesyl diphosphate + H2O = Fe(II)-heme o + diphosphate. The protein operates within porphyrin-containing compound metabolism; heme O biosynthesis; heme O from protoheme: step 1/1. In terms of biological role, converts heme B (protoheme IX) to heme O by substitution of the vinyl group on carbon 2 of heme B porphyrin ring with a hydroxyethyl farnesyl side group. The polypeptide is Protoheme IX farnesyltransferase (Prochlorococcus marinus (strain MIT 9215)).